Here is a 2842-residue protein sequence, read N- to C-terminus: Adenomatous polyposis coli protein (2842 aa).

Ala2 carries the N-acetylalanine modification. Positions 2–62 form a coiled coil; sequence AAASYDQLLK…GSIEDETMTS (61 aa). Residues Ser105 and Ser109 each carry the phosphoserine modification. Residues 125–260 adopt a coiled-coil conformation; sequence SRESTGYLEE…ASHEAERQLE (136 aa). The segment at 238-304 is disordered; the sequence is AEAERSSQSK…THSAPRRLTS (67 aa). The segment covering 239–259 has biased composition (basic and acidic residues); sequence EAERSSQSKHETASHEAERQL. A compositionally biased stretch (polar residues) spans 268 to 279; sequence NLATSGSGQSSA. ARM repeat units lie at residues 451 to 493, 503 to 545, 546 to 589, 590 to 636, 637 to 681, 682 to 723, and 724 to 765; these read LMKL…HYSV, LTNL…IASV, LRNL…VLSA, LWNL…GGGI, LRNV…ACGT, LWNL…SAAA, and LRNL…LDAQ. Ser742, Ser746, and Ser778 each carry phosphoserine. The interval 828 to 877 is disordered; the sequence is VLPSSSSSRGSLDSSRSEKDRSLERERGIGLSTYHSATENPGTSSKRGLQ. Residues 831 to 841 are compositionally biased toward low complexity; sequence SSSSSRGSLDS. Positions 842 to 855 are enriched in basic and acidic residues; the sequence is SRSEKDRSLERERG. Positions 860-877 are enriched in polar residues; that stretch reads TYHSATENPGTSSKRGLQ. At Ser906 the chain carries Phosphoserine. Disordered regions lie at residues 921–942 and 956–988; these read RRSSASHTHPNTHNFAKSESSN and RSSNDSLNSVTSSDGYGKRGQMKPSVESYSEDD. A compositionally biased stretch (polar residues) spans 931-942; it reads NTHNFAKSESSN. Low complexity predominate over residues 959–969; the sequence is NDSLNSVTSSD. Residues Ser985, Ser1036, and Ser1040 each carry the phosphoserine modification. The tract at residues 1018–1167 is interaction with catenins; the sequence is ELDTPINYSL…TNYSIKYNEE (150 aa). 4 disordered regions span residues 1058 to 1078, 1092 to 1166, 1188 to 1249, and 1306 to 1373; these read IKQNEQRQSRSQNTNFPVYSE, GQQE…KYNE, SQKP…CKVP, and ENDV…PEHY. Polar residues-rich tracts occupy residues 1066–1078 and 1103–1128; these read SRSQNTNFPVYSE and RGTNGSETNRMGSSHAVNQNVNQSLC. Basic and acidic residues predominate over residues 1144–1157; it reads RYSEEEQHEEEERP. Composition is skewed to low complexity over residues 1188–1200 and 1209–1223; these read SQKPSFSFSKTPS and NSPSSEAASAPSSNA. Polar residues-rich tracts occupy residues 1224-1242 and 1323-1340; these read KRQSQLHPSSAQRNGQTPK and VSQSTRTKPSRLQASGLA. Over residues 1352–1363 the composition is skewed to low complexity; that stretch reads SSGAKSPSKSGA. Residues Ser1357, Ser1368, Ser1382, Ser1389, and Ser1392 each carry the phosphoserine modification. Disordered stretches follow at residues 1398–1474, 1525–1568, 1584–1609, and 1661–1711; these read IASS…VSAA, PPVQ…SDDD, KSSRKAKKLAQTASKLPPPVARKPSQ, and ESPP…IPDL. The residue at position 1435 (Thr1435) is a Phosphothreonine. Residues 1435–1444 show a composition bias toward pro residues; it reads TPPPPPPPQP. The span at 1532 to 1546 shows a compositional bias: acidic residues; that stretch reads NGNETEPEQPEESNE. A compositionally biased stretch (basic and acidic residues) spans 1547–1562; that stretch reads NQDKEVEKPDSEKDLL. The residue at position 1565 (Ser1565) is a Phosphoserine. The span at 1681–1700 shows a compositional bias: basic and acidic residues; it reads EFEKRDTIPTEGRSTDEAQR. At Ser1714 the chain carries Phosphoserine. Residues 1748 to 1762 are compositionally biased toward polar residues; it reads VQQASMTSSGTNKNQ. 3 disordered regions span residues 1748 to 1950, 1963 to 2010, and 2043 to 2067; these read VQQA…EKLQ, RNSS…APKS, and SSAMPKKRRPSRLKGEGEWQSPRKV. Residue Ser1772 is modified to Phosphoserine. Basic and acidic residues-rich tracts occupy residues 1783 to 1792 and 1804 to 1833; these read YRTRVRKNTD and SDNKDSKKQSLKNNPKDLNDKLPDNEDRVR. Residues Ser1859, Ser1861, and Ser1862 each carry the phosphoserine modification. The segment at 1864-1891 is highly charged; the sequence is DFDDDDVDLSREKAELRKGKESKDSEAK. Residues 1871-1894 show a composition bias toward basic and acidic residues; the sequence is DLSREKAELRKGKESKDSEAKVTC. Low complexity predominate over residues 1899–1911; the sequence is SSSQQSARKAQAS. Positions 1927–1936 are enriched in polar residues; sequence EQPTFPQSSK. Residues 1937–1949 show a composition bias toward basic and acidic residues; sequence DVPDRGAATDEKL. Phosphoserine is present on residues Ser1969 and Ser1971. An interaction with AXIN1 region spans residues 2034-2058; that stretch reads EDDLLRECISSAMPKKRRPSRLKGE. 6 positions are modified to phosphoserine: Ser2087, Ser2092, Ser2125, Ser2129, Ser2130, and Ser2132. 3 disordered regions span residues 2148 to 2173, 2234 to 2641, and 2664 to 2842; these read FHLTPDQEEKPFTSHKGPRILKPGEK, PGVR…AESK, and CPIN…VTSV. Residue Thr2151 is modified to Phosphothreonine. The basic region stretch occupies residues 2167–2674; sequence ILKPGEKSTL…PINNPRSGRS (508 aa). Polar residues-rich tracts occupy residues 2257–2272 and 2283–2347; these read ASKSPSEGPVATTSPR and SPIT…QLPR. Phosphoserine is present on residues Ser2260, Ser2270, and Ser2283. The segment covering 2348–2369 has biased composition (low complexity); sequence TSSPSTASTKSSGSGKMSYTSP. Composition is skewed to polar residues over residues 2370–2411 and 2418–2427; these read GRQL…NGSN and RMSSTKSSGS. Over residues 2459-2477 the composition is skewed to low complexity; the sequence is SASFESLSPSSRPDSPTRS. Ser2473 and Ser2535 each carry phosphoserine. Residues 2475–2842 form an interaction with DLG1 region; sequence TRSQAQTPVL…HSGSYLVTSV (368 aa). Residues 2518–2535 are compositionally biased toward basic and acidic residues; the sequence is SDGRPSKRHDIARSHSES. The span at 2555 to 2568 shows a compositional bias: polar residues; sequence SSSLPRVSTWRRTG. At Ser2569 the chain carries Phosphoserine. Low complexity predominate over residues 2569–2579; the sequence is SSSSILSASSE. Residues 2580-2592 show a composition bias toward basic and acidic residues; that stretch reads SSEKAKSEDEKHV. Residues 2629-2638 show a composition bias toward low complexity; the sequence is TTSSGAASGA. Composition is skewed to polar residues over residues 2668-2679 and 2702-2713; these read NPRSGRSPTGNT and GKQSVGSGSPVQ. A phosphoserine mark is found at Ser2671 and Ser2674. The interaction with MAPRE1 stretch occupies residues 2674–2842; it reads SPTGNTPPVI…HSGSYLVTSV (169 aa). Phosphothreonine is present on Thr2679. Phosphoserine occurs at positions 2710 and 2723. A compositionally biased stretch (low complexity) spans 2762-2773; that stretch reads SSSSSSKHSSPS. The span at 2783 to 2809 shows a compositional bias: polar residues; the sequence is FNYNPSPRKSSADSTSARPSQIPTPVG. Ser2788 carries the phosphoserine modification. Residues 2802–2805 carry the Microtubule tip localization signal motif; sequence SQIP. The PDZ-binding motif lies at 2840-2842; that stretch reads TSV.

This sequence belongs to the adenomatous polyposis coli (APC) family. Forms homooligomers. Found in a complex consisting of ARHGEF4, APC and CTNNB1. Found in a complex composed of MACF1, APC, AXIN1, CTNNB1 and GSK3B. The complex composed, at least, of APC, CTNNB1 and GSK3B interacts with JPT1; the interaction requires the inactive form of GSK3B (phosphorylated at 'Ser-9'). Interacts with APC2. Interacts with DLG1 (via PDZ domains) and DLG3 (via PDZ domains). Interacts with alpha- and beta-catenins. Interacts with AXIN1 (via RGS domain). Interacts with ARHGEF4 (via N-terminus). Interacts (via C-terminal residues 2674-2843) with MAPRE1 (via C-terminal residues 206-211); the interaction inhibits association with and bundling of F-actin. Interacts with MAPRE2 and MAPRE3 (via C-terminus). Interacts with DIAPH1; DIAPH1 acts as a scaffold protein for MAPRE1 and APC to stabilize microtubules and promote cell migration. Interacts with DIAPH2. Interacts with SCRIB; may mediate APC targeting to adherens junctions of epithelial cells. Interacts with SPATA13 (via N-terminus and SH3 domain). Interacts with ASAP1 (via SH3 domain). Interacts (at the cell membrane) with AMER1 and AMER2 (via ARM repeats). Interacts with KHDRBS1. Interacts with actin; binds both to F-actin and actin filament bundles. Phosphorylated; phosphorylation enhances the F-actin bundling activity. Phosphorylated by GSK3B. In terms of processing, ubiquitinated, leading to its degradation by the proteasome. Ubiquitination is facilitated by Axin. Deubiquitinated by ZRANB1/TRABID.

Its subcellular location is the cell junction. It is found in the adherens junction. The protein localises to the cytoplasm. The protein resides in the cytoskeleton. It localises to the cell projection. Its subcellular location is the lamellipodium. It is found in the ruffle membrane. The protein localises to the cell membrane. In terms of biological role, tumor suppressor. Promotes rapid degradation of CTNNB1 and participates in Wnt signaling as a negative regulator. APC activity is correlated with its phosphorylation state. Activates the GEF activity of SPATA13 and ARHGEF4. Plays a role in hepatocyte growth factor (HGF)-induced cell migration. Required for MMP9 up-regulation via the JNK signaling pathway in colorectal tumor cells. Associates with both microtubules and actin filaments, components of the cytoskeleton. Plays a role in mediating the organization of F-actin into ordered bundles. Functions downstream of Rho GTPases and DIAPH1 to selectively stabilize microtubules. Acts as a mediator of ERBB2-dependent stabilization of microtubules at the cell cortex. It is required for the localization of MACF1 to the cell membrane and this localization of MACF1 is critical for its function in microtubule stabilization. The protein is Adenomatous polyposis coli protein (Apc) of Rattus norvegicus (Rat).